The primary structure comprises 221 residues: Phosphatidylethanolamine-binding protein homolog F40A3.3 (221 aa).

Belongs to the phosphatidylethanolamine-binding protein family.

This is Phosphatidylethanolamine-binding protein homolog F40A3.3 from Caenorhabditis elegans.